The primary structure comprises 415 residues: D-threonate kinase (415 aa).

Substrate contacts are provided by residues aspartate 9, arginine 53, and 81–84 (KIDS). ATP is bound by residues serine 251, 345–348 (GGET), and glycine 392.

It belongs to the four-carbon acid sugar kinase family.

The enzyme catalyses D-threonate + ATP = 4-O-phospho-D-threonate + ADP + H(+). Its function is as follows. Catalyzes the ATP-dependent phosphorylation of D-threonate to D-threonate 4-phosphate. Can also phosphorylate 4-hydroxy-L-threonine, with lower efficiency. In Cupriavidus necator (strain ATCC 17699 / DSM 428 / KCTC 22496 / NCIMB 10442 / H16 / Stanier 337) (Ralstonia eutropha), this protein is D-threonate kinase.